An 895-amino-acid polypeptide reads, in one-letter code: Isoleucine--tRNA ligase (895 aa).

The 'HIGH' region signature appears at 57-67 (PYANGSIHVGH). E549 provides a ligand contact to L-isoleucyl-5'-AMP. Residues 590–594 (KMSKS) carry the 'KMSKS' region motif. K593 provides a ligand contact to ATP. The Zn(2+) site is built by C869, C872, C888, and C891.

The protein belongs to the class-I aminoacyl-tRNA synthetase family. IleS type 1 subfamily. As to quaternary structure, monomer. It depends on Zn(2+) as a cofactor.

Its subcellular location is the cytoplasm. It carries out the reaction tRNA(Ile) + L-isoleucine + ATP = L-isoleucyl-tRNA(Ile) + AMP + diphosphate. In terms of biological role, catalyzes the attachment of isoleucine to tRNA(Ile). As IleRS can inadvertently accommodate and process structurally similar amino acids such as valine, to avoid such errors it has two additional distinct tRNA(Ile)-dependent editing activities. One activity is designated as 'pretransfer' editing and involves the hydrolysis of activated Val-AMP. The other activity is designated 'posttransfer' editing and involves deacylation of mischarged Val-tRNA(Ile). The chain is Isoleucine--tRNA ligase from Mycoplasma genitalium (strain ATCC 33530 / DSM 19775 / NCTC 10195 / G37) (Mycoplasmoides genitalium).